The following is a 227-amino-acid chain: Cytochrome c oxidase subunit 2 (227 aa).

Residues 1–14 lie on the Mitochondrial intermembrane side of the membrane; it reads MAYPLQMGLQDATS. The helical transmembrane segment at 15 to 45 threads the bilayer; the sequence is PIMEELLHFHDHTLMIVFLISSLVLYIISLM. Topologically, residues 46–59 are mitochondrial matrix; that stretch reads LTTKLTHTSTMDAQ. Residues 60-87 form a helical membrane-spanning segment; it reads EVETVWTILPAIILILIALPSLRILYMM. Topologically, residues 88–227 are mitochondrial intermembrane; the sequence is DEINNPSLTV…HFEKWSTSML (140 aa). 6 residues coordinate Cu cation: His161, Cys196, Glu198, Cys200, His204, and Met207. A Mg(2+)-binding site is contributed by Glu198.

The protein belongs to the cytochrome c oxidase subunit 2 family. In terms of assembly, component of the cytochrome c oxidase (complex IV, CIV), a multisubunit enzyme composed of 14 subunits. The complex is composed of a catalytic core of 3 subunits MT-CO1, MT-CO2 and MT-CO3, encoded in the mitochondrial DNA, and 11 supernumerary subunits COX4I, COX5A, COX5B, COX6A, COX6B, COX6C, COX7A, COX7B, COX7C, COX8 and NDUFA4, which are encoded in the nuclear genome. The complex exists as a monomer or a dimer and forms supercomplexes (SCs) in the inner mitochondrial membrane with NADH-ubiquinone oxidoreductase (complex I, CI) and ubiquinol-cytochrome c oxidoreductase (cytochrome b-c1 complex, complex III, CIII), resulting in different assemblies (supercomplex SCI(1)III(2)IV(1) and megacomplex MCI(2)III(2)IV(2)). Found in a complex with TMEM177, COA6, COX18, COX20, SCO1 and SCO2. Interacts with TMEM177 in a COX20-dependent manner. Interacts with COX20. Interacts with COX16. Requires Cu cation as cofactor.

It localises to the mitochondrion inner membrane. It carries out the reaction 4 Fe(II)-[cytochrome c] + O2 + 8 H(+)(in) = 4 Fe(III)-[cytochrome c] + 2 H2O + 4 H(+)(out). In terms of biological role, component of the cytochrome c oxidase, the last enzyme in the mitochondrial electron transport chain which drives oxidative phosphorylation. The respiratory chain contains 3 multisubunit complexes succinate dehydrogenase (complex II, CII), ubiquinol-cytochrome c oxidoreductase (cytochrome b-c1 complex, complex III, CIII) and cytochrome c oxidase (complex IV, CIV), that cooperate to transfer electrons derived from NADH and succinate to molecular oxygen, creating an electrochemical gradient over the inner membrane that drives transmembrane transport and the ATP synthase. Cytochrome c oxidase is the component of the respiratory chain that catalyzes the reduction of oxygen to water. Electrons originating from reduced cytochrome c in the intermembrane space (IMS) are transferred via the dinuclear copper A center (CU(A)) of subunit 2 and heme A of subunit 1 to the active site in subunit 1, a binuclear center (BNC) formed by heme A3 and copper B (CU(B)). The BNC reduces molecular oxygen to 2 water molecules using 4 electrons from cytochrome c in the IMS and 4 protons from the mitochondrial matrix. The protein is Cytochrome c oxidase subunit 2 (MT-CO2) of Phoca vitulina (Harbor seal).